We begin with the raw amino-acid sequence, 122 residues long: Ribosome-binding factor A (122 aa).

This sequence belongs to the RbfA family. In terms of assembly, monomer. Binds 30S ribosomal subunits, but not 50S ribosomal subunits or 70S ribosomes.

The protein resides in the cytoplasm. One of several proteins that assist in the late maturation steps of the functional core of the 30S ribosomal subunit. Associates with free 30S ribosomal subunits (but not with 30S subunits that are part of 70S ribosomes or polysomes). Required for efficient processing of 16S rRNA. May interact with the 5'-terminal helix region of 16S rRNA. This Polaromonas naphthalenivorans (strain CJ2) protein is Ribosome-binding factor A.